Here is a 150-residue protein sequence, read N- to C-terminus: Macrodomain Ter protein (150 aa).

The protein belongs to the MatP family. Homodimer.

The protein localises to the cytoplasm. Functionally, required for spatial organization of the terminus region of the chromosome (Ter macrodomain) during the cell cycle. Prevents early segregation of duplicated Ter macrodomains during cell division. Binds specifically to matS, which is a 13 bp signature motif repeated within the Ter macrodomain. This is Macrodomain Ter protein from Escherichia coli O81 (strain ED1a).